Consider the following 255-residue polypeptide: HLA class II histocompatibility antigen, DQ alpha 2 chain (255 aa).

The signal sequence occupies residues 1–23 (MILNKALLLGALALTAVMSPCGG). An alpha-1 region spans residues 24-110 (EDIVADHVAS…RQSNSTAATN (87 aa)). The Extracellular segment spans residues 24 to 217 (EDIVADHVAS…IPAPMSELTE (194 aa)). N104 and N144 each carry an N-linked (GlcNAc...) asparagine glycan. Residues 111-204 (EVPEVTVFSK…GLDEPLLKHW (94 aa)) are alpha-2. Residues 113–205 (PEVTVFSKFP…LDEPLLKHWE (93 aa)) form the Ig-like C1-type domain. C133 and C189 are disulfide-bonded. The tract at residues 205–217 (EPEIPAPMSELTE) is connecting peptide. The chain crosses the membrane as a helical span at residues 218–240 (TLVCALGLSVGLMGIVVGTVFII). The Cytoplasmic portion of the chain corresponds to 241–255 (QGLRSVGASRHQGLL).

It belongs to the MHC class II family. As to quaternary structure, heterodimer of an alpha and a beta subunit; also referred as MHC class II molecule. Dimer formation with HLA-DQB2, but not with HLA-DQB1, is required for efficient exit from the endoplasmic reticulum (ER). In the ER, forms a heterononamer; 3 MHC class II molecules bind to a CD74 homotrimer (also known as invariant chain or HLA class II histocompatibility antigen gamma chain). In the endosomal/lysosomal system; CD74 undergoes sequential degradation by various proteases; leaving a small fragment termed CLIP on each MHC class II molecule. MHC class II molecule interacts with HLA_DM, and HLA_DO in B-cells, in order to release CLIP and facilitate the binding of antigenic peptides. Association with HLA-DMA also occurs in skin Langerhans cells, in post-Golgi compartments. In terms of tissue distribution, restricted to skin Langerhans cells, although some expression at low levels may occur at the surface of B lymphoblastoid cells.

The protein localises to the cell membrane. It localises to the endoplasmic reticulum membrane. Its subcellular location is the golgi apparatus. It is found in the trans-Golgi network membrane. The protein resides in the endosome membrane. The protein localises to the lysosome membrane. Its function is as follows. Binds peptides derived from antigens that access the endocytic route of antigen presenting cells (APC) and presents them on the cell surface for recognition by the CD4 T-cells. The peptide binding cleft accommodates peptides of 10-30 residues. The peptides presented by MHC class II molecules are generated mostly by degradation of proteins that access the endocytic route, where they are processed by lysosomal proteases and other hydrolases. Exogenous antigens that have been endocytosed by the APC are thus readily available for presentation via MHC II molecules, and for this reason this antigen presentation pathway is usually referred to as exogenous. As membrane proteins on their way to degradation in lysosomes as part of their normal turn-over are also contained in the endosomal/lysosomal compartments, exogenous antigens must compete with those derived from endogenous components. Autophagy is also a source of endogenous peptides, autophagosomes constitutively fuse with MHC class II loading compartments. In addition to APCs, other cells of the gastrointestinal tract, such as epithelial cells, express MHC class II molecules and CD74 and act as APCs, which is an unusual trait of the GI tract. To produce a MHC class II molecule that presents an antigen, three MHC class II molecules (heterodimers of an alpha and a beta chain) associate with a CD74 trimer in the ER to form a heterononamer. Soon after the entry of this complex into the endosomal/lysosomal system where antigen processing occurs, CD74 undergoes a sequential degradation by various proteases, including CTSS and CTSL, leaving a small fragment termed CLIP (class-II-associated invariant chain peptide). The removal of CLIP is facilitated by HLA-DM via direct binding to the alpha-beta-CLIP complex so that CLIP is released. HLA-DM stabilizes MHC class II molecules until primary high affinity antigenic peptides are bound. The MHC II molecule bound to a peptide is then transported to the cell membrane surface. In B-cells, the interaction between HLA-DM and MHC class II molecules is regulated by HLA-DO. Primary dendritic cells (DCs) also to express HLA-DO. Lysosomal microenvironment has been implicated in the regulation of antigen loading into MHC II molecules, increased acidification produces increased proteolysis and efficient peptide loading. This Homo sapiens (Human) protein is HLA class II histocompatibility antigen, DQ alpha 2 chain (HLA-DQA2).